A 670-amino-acid chain; its full sequence is Rhophilin-1 (670 aa).

The tract at residues 1-20 (MILEERPDGAGAGEESPRLQ) is disordered. Residues 23-97 (DSLTQIQCGQ…LEELSGGVDP (75 aa)) enclose the REM-1 domain. Ser24 carries the post-translational modification Phosphoserine. The region spanning 108 to 457 (PMIPLGLKET…LAKYAELDRE (350 aa)) is the BRO1 domain. Residues 513 to 592 (PVHLTRGEGG…ASLQVVSLLP (80 aa)) form the PDZ domain. Residues 616-670 (QREHGCKTPASTWASPRPLLNWSRKAQQGKTGGCPQPCAPVKPAPPSSLKHPGWP) are disordered. Pro residues predominate over residues 652-661 (PCAPVKPAPP).

The protein belongs to the RHPN family. As to quaternary structure, binds specifically to GTP-Rho. Interacts with ROPN1.

Has no enzymatic activity. May serve as a target for Rho, and interact with some cytoskeletal component upon Rho binding or relay a Rho signal to other molecules. The sequence is that of Rhophilin-1 from Homo sapiens (Human).